The primary structure comprises 448 residues: Trk system potassium uptake protein TrkA homolog 1 (448 aa).

Positions 1-124 (MKAVIIGAGE…RAQVGVDLMI (124 aa)) constitute an RCK N-terminal 1 domain. NAD(+) contacts are provided by residues 7–11 (GAGEV), aspartate 29, 70–71 (TG), and arginine 101. Residues 144-225 (IDAEMFAEGK…MEDLESVFGS (82 aa)) form the RCK C-terminal 1 domain. Residues 230–348 (RTRILLIGCG…FEMVGIDMAV (119 aa)) enclose the RCK N-terminal 2 domain. 232–262 (RILLIGCGIVGMYLAKLIDKEENADLRIIEH) lines the NAD(+) pocket. The RCK C-terminal 2 domain occupies 368–448 (QTLTTIEGER…AASEVEKYFK (81 aa)).

In terms of biological role, part of a potassium transport system. The polypeptide is Trk system potassium uptake protein TrkA homolog 1 (trkA1) (Methanosarcina mazei (strain ATCC BAA-159 / DSM 3647 / Goe1 / Go1 / JCM 11833 / OCM 88) (Methanosarcina frisia)).